We begin with the raw amino-acid sequence, 374 residues long: Transcription termination factor 1, mitochondrial (374 aa).

The transit peptide at 1 to 37 (MASRNIWRVRRNFLFDLRGWVPQYSAEVFLKSIPFRP) directs the protein to the mitochondrion. Interaction with DNA stretches follow at residues 146–147 (RS), 224–228 (QSTKR), 301–308 (SEKKFNDK), 332–335 (SIHT), and 361–368 (SQRRYEAK).

This sequence belongs to the mTERF family. In terms of assembly, monomer. In terms of processing, is a phosphoprotein. While the DNA-binding activity is unaffected by the phosphorylation/dephosphorylation state, only the phosphorylated form of the protein is active for termination activity. Functioning seems to be regulated by phosphorylation.

It localises to the mitochondrion. Its function is as follows. Transcription termination factor. Binds to a 28 bp region within the tRNA(Leu(uur)) gene at a position immediately adjacent to and downstream of the 16S rRNA gene; this region comprises a tridecamer sequence critical for directing accurate termination. Binds DNA along the major grove and promotes DNA bending and partial unwinding. Promotes base flipping. Transcription termination activity appears to be polarized with highest specificity for transcripts initiated on the light strand. This is Transcription termination factor 1, mitochondrial (Mterf1) from Rattus norvegicus (Rat).